The following is a 337-amino-acid chain: Phosphate acyltransferase (337 aa).

It belongs to the PlsX family. As to quaternary structure, homodimer. Probably interacts with PlsY.

The protein resides in the cytoplasm. It catalyses the reaction a fatty acyl-[ACP] + phosphate = an acyl phosphate + holo-[ACP]. Its pathway is lipid metabolism; phospholipid metabolism. Catalyzes the reversible formation of acyl-phosphate (acyl-PO(4)) from acyl-[acyl-carrier-protein] (acyl-ACP). This enzyme utilizes acyl-ACP as fatty acyl donor, but not acyl-CoA. The chain is Phosphate acyltransferase from Polynucleobacter asymbioticus (strain DSM 18221 / CIP 109841 / QLW-P1DMWA-1) (Polynucleobacter necessarius subsp. asymbioticus).